Here is a 761-residue protein sequence, read N- to C-terminus: Xaa-Pro dipeptidyl-peptidase (761 aa).

Active-site charge relay system residues include Ser349, Asp469, and His499.

This sequence belongs to the peptidase S15 family. As to quaternary structure, homodimer.

The protein localises to the cytoplasm. The catalysed reaction is Hydrolyzes Xaa-Pro-|- bonds to release unblocked, N-terminal dipeptides from substrates including Ala-Pro-|-p-nitroanilide and (sequentially) Tyr-Pro-|-Phe-Pro-|-Gly-Pro-|-Ile.. Its function is as follows. Removes N-terminal dipeptides sequentially from polypeptides having unsubstituted N-termini provided that the penultimate residue is proline. The chain is Xaa-Pro dipeptidyl-peptidase from Streptococcus equi subsp. zooepidemicus (strain H70).